A 382-amino-acid chain; its full sequence is Heme A synthase (382 aa).

Transmembrane regions (helical) follow at residues 25-45, 112-132, 141-161, 176-196, 211-231, 270-290, 303-323, and 327-347; these read GAVR…VAVG, LLGR…WARG, GLLG…IMVA, LALH…LAAG, VVAC…GLVA, LALV…VAIA, AAAG…GLGI, and LLHV…AVLI. Position 277 (His-277) interacts with heme. Position 338 (His-338) interacts with heme.

The protein belongs to the COX15/CtaA family. Type 2 subfamily. In terms of assembly, interacts with CtaB. It depends on heme b as a cofactor.

Its subcellular location is the cell membrane. The catalysed reaction is Fe(II)-heme o + 2 A + H2O = Fe(II)-heme a + 2 AH2. It functions in the pathway porphyrin-containing compound metabolism; heme A biosynthesis; heme A from heme O: step 1/1. Its function is as follows. Catalyzes the conversion of heme O to heme A by two successive hydroxylations of the methyl group at C8. The first hydroxylation forms heme I, the second hydroxylation results in an unstable dihydroxymethyl group, which spontaneously dehydrates, resulting in the formyl group of heme A. This is Heme A synthase from Methylorubrum extorquens (strain CM4 / NCIMB 13688) (Methylobacterium extorquens).